The primary structure comprises 407 residues: Formamidase (407 aa).

Homotrimer.

It catalyses the reaction formamide + H2O = formate + NH4(+). Its function is as follows. Hydrolyzes formamide with the production of ammonia which can be used as a source of nitrogen for growth. Also acts, more slowly, on acetamide, propanamide and butanamide. The polypeptide is Formamidase (fmdA) (Methylophilus methylotrophus (Bacterium W3A1)).